Reading from the N-terminus, the 427-residue chain is Glutamate-1-semialdehyde 2,1-aminomutase (427 aa).

Lys263 carries the post-translational modification N6-(pyridoxal phosphate)lysine.

This sequence belongs to the class-III pyridoxal-phosphate-dependent aminotransferase family. HemL subfamily. As to quaternary structure, homodimer. Requires pyridoxal 5'-phosphate as cofactor.

It localises to the cytoplasm. It carries out the reaction (S)-4-amino-5-oxopentanoate = 5-aminolevulinate. Its pathway is porphyrin-containing compound metabolism; protoporphyrin-IX biosynthesis; 5-aminolevulinate from L-glutamyl-tRNA(Glu): step 2/2. The polypeptide is Glutamate-1-semialdehyde 2,1-aminomutase (Caldicellulosiruptor saccharolyticus (strain ATCC 43494 / DSM 8903 / Tp8T 6331)).